A 166-amino-acid polypeptide reads, in one-letter code: Large ribosomal subunit protein uL10 (166 aa).

Belongs to the universal ribosomal protein uL10 family. As to quaternary structure, part of the ribosomal stalk of the 50S ribosomal subunit. The N-terminus interacts with L11 and the large rRNA to form the base of the stalk. The C-terminus forms an elongated spine to which L12 dimers bind in a sequential fashion forming a multimeric L10(L12)X complex.

In terms of biological role, forms part of the ribosomal stalk, playing a central role in the interaction of the ribosome with GTP-bound translation factors. The sequence is that of Large ribosomal subunit protein uL10 from Azotobacter vinelandii (strain DJ / ATCC BAA-1303).